The primary structure comprises 545 residues: Hyaluronidase PH-20 (545 aa).

A signal peptide spans 1–35 (MGVLKFKHIFFGSAVELSGVFQIVFIFLLIPCCLT). Cystine bridges form between Cys-60-Cys-355 and Cys-224-Cys-239. The N-linked (GlcNAc...) asparagine glycan is linked to Asn-82. Glu-148 serves as the catalytic Proton donor. Residue Asn-180 is glycosylated (N-linked (GlcNAc...) asparagine). An N-linked (GlcNAc...) asparagine glycan is attached at Asn-372. Cystine bridges form between Cys-380–Cys-391, Cys-385–Cys-439, and Cys-441–Cys-468.

This sequence belongs to the glycosyl hydrolase 56 family. Testis.

It localises to the cell membrane. It carries out the reaction Random hydrolysis of (1-&gt;4)-linkages between N-acetyl-beta-D-glucosamine and D-glucuronate residues in hyaluronate.. In terms of biological role, involved in sperm-egg adhesion. Upon fertilization sperm must first penetrate a layer of cumulus cells that surrounds the egg before reaching the zona pellucida. The cumulus cells are embedded in a matrix containing hyaluronic acid which is formed prior to ovulation. This protein aids in penetrating the layer of cumulus cells by digesting hyaluronic acid. The polypeptide is Hyaluronidase PH-20 (SPAM1) (Oryctolagus cuniculus (Rabbit)).